The primary structure comprises 192 residues: UPF0149 protein YgfB (192 aa).

It belongs to the UPF0149 family.

The polypeptide is UPF0149 protein YgfB (Salmonella typhi).